The following is a 298-amino-acid chain: Enoyl-CoA hydratase AFT6-1 (298 aa).

Residues 1-39 form a disordered region; that stretch reads MTYSTTKSVAMNPDEDAPPSDINSSGRLMSHSEVEPRGN.

The protein belongs to the enoyl-CoA hydratase/isomerase family.

The catalysed reaction is a (3S)-3-hydroxyacyl-CoA = a (2E)-enoyl-CoA + H2O. The enzyme catalyses a 4-saturated-(3S)-3-hydroxyacyl-CoA = a (3E)-enoyl-CoA + H2O. The protein operates within mycotoxin biosynthesis. Its function is as follows. Enoyl-CoA hydratase; part of the gene clusters that mediate the biosynthesis of the host-selective toxins (HSTs) AF-toxins responsible for Alternaria black spot of strawberry disease by the strawberry pathotype. AF-toxin I and III are valine derivatives of 2,3-dyhydroxy-isovaleric acid and 2-hydroxy-isovaleric acid respectively, while AF II is an isoleucine derivative of 2-hydroxy-valeric acid. These derivatives are bound to a 9,10-epoxy-8-hydroxy-9-methyl-decatrienoic acid (EDA) moiety. On cellular level, AF-toxin affects plasma membrane of susceptible cells and cause a sudden increase in loss of K(+) after a few minutes of toxin treatment. The aldo-keto reductase AFTS1 catalyzes the conversion of 2-keto-isovaleric acid (2-KIV) to 2-hydroxy-isovaleric acid (2-HIV) by reduction of its ketone to an alcohol. The acyl-CoA ligase AFT1, the hydrolase AFT2 and the enoyl-CoA hydratases AFT3 and AFT6, but also the polyketide synthase AFT9, the acyl-CoA dehydrogenase AFT10, the cytochrome P450 monooxygenase AFT11 and the oxidoreductase AFT12 are all involved in the biosynthesis of the AK-, AF- and ACT-toxin common EDA structural moiety. The exact function of each enzyme, and of additional enzymes identified within the AF-toxin clusters have still to be determined. This chain is Enoyl-CoA hydratase AFT6-1, found in Alternaria alternata (Alternaria rot fungus).